A 592-amino-acid polypeptide reads, in one-letter code: Frizzled-9 (592 aa).

Positions 1–23 (MAVPPLLRGALLLWQLLATGGAA) are cleaved as a signal peptide. Residues 24 to 230 (LEIGRFDPER…EVFWSRRDKD (207 aa)) lie on the Extracellular side of the membrane. The 122-residue stretch at 35–156 (RGPAPCQAME…NDPHALCMEA (122 aa)) folds into the FZ domain. 5 cysteine pairs are disulfide-bonded: C40-C101, C48-C94, C85-C123, C112-C153, and C116-C140. N54 carries N-linked (GlcNAc...) asparagine glycosylation. Residues 59–173 (PNLLGHTSQG…PTEPHKGLGM (115 aa)) are required for Wnt-activated receptor activity. A glycan (N-linked (GlcNAc...) asparagine) is linked at N159. A helical transmembrane segment spans residues 231 to 251 (FALVWMAVWSALCFFSTAFTV). Topologically, residues 252–267 (FTFLLEPHRFQYPERP) are cytoplasmic. Residues 268 to 288 (IIFLSMCYNVYSLAFLIRAVA) traverse the membrane as a helical segment. The Extracellular portion of the chain corresponds to 289 to 316 (GAQSVACDQEAGALYVIQEGLENTGCTL). The helical transmembrane segment at 317 to 337 (VFLLLYYFGMASSLWWVVLTL) threads the bilayer. Over 338 to 356 (TWFLAAGKKWGHEAIEAHG) the chain is Cytoplasmic. Residues 357-377 (SYFHMAAWGLPALKTIVVLTL) form a helical membrane-spanning segment. Over 378–401 (RKVAGDELTGLCYVASMDPAALTG) the chain is Extracellular. The helical transmembrane segment at 402–422 (FVLVPLSCYLVLGTSFLLTGF) threads the bilayer. At 423–448 (VALFHIRKIMKTGGTNTEKLEKLMVK) the chain is on the cytoplasmic side. The chain crosses the membrane as a helical span at residues 449-469 (IGVFSILYTVPATCVIVCYVY). The Extracellular portion of the chain corresponds to 470 to 509 (ERLNMDFWRLRATEQPCTAATVPGGRRDCSLPGGSVPTVA). The helical transmembrane segment at 510–530 (VFMLKIFMSLVVGITSGVWVW) threads the bilayer. Over 531–592 (SSKTFQTWQS…DPSLENPTHL (62 aa)) the chain is Cytoplasmic. The short motif at 533–538 (KTFQTW) is the Lys-Thr-X-X-X-Trp motif, mediates interaction with the PDZ domain of Dvl family members element. A required for CTNNB1 accumulation and TCF transcription factor activity region spans residues 555–592 (ACRTPGGYGRGTHCHYKAPTVVLHMTKTDPSLENPTHL).

Belongs to the G-protein coupled receptor Fz/Smo family. Post-translationally, ubiquitinated by ZNRF3, leading to its degradation by the proteasome. In the embryo, found in the neural tube, trunk skeletal muscle precursors (myotomes), limb skeletal anlagen, craniofacial regions and nephric ducts. In the adult, expression is abundant in heart, brain, testis and skeletal muscle. In the testis, expressed in all spermatogenic cell types. Lower levels in adult lung, liver and kidney. Barely detectable in spleen. Expressed also in chondrocytes.

Its subcellular location is the cell membrane. In terms of biological role, receptor for WNT2 that is coupled to the beta-catenin canonical signaling pathway, which leads to the activation of disheveled proteins, inhibition of GSK-3 kinase, nuclear accumulation of beta-catenin and activation of Wnt target genes. Plays a role in neuromuscular junction (NMJ) assembly by negatively regulating the clustering of acetylcholine receptors (AChR) through the beta-catenin canonical signaling pathway. May play a role in neural progenitor cells (NPCs) viability through the beta-catenin canonical signaling pathway by negatively regulating cell cycle arrest leading to inhibition of neuron apoptotic process. During hippocampal development, regulates neuroblast proliferation and apoptotic cell death. Controls bone formation through non canonical Wnt signaling mediated via ISG15. Positively regulates bone regeneration through non canonical Wnt signaling. This is Frizzled-9 (Fzd9) from Mus musculus (Mouse).